Consider the following 303-residue polypeptide: Golgi to ER traffic protein 2 (303 aa).

Topologically, residues 1–168 (MSEQPLSQDE…NAYNIYQQRL (168 aa)) are cytoplasmic. The tract at residues 19–86 (RQAKMARGKA…DPEDDPDLMD (68 aa)) is disordered. The span at 31–48 (RLNNILSQGSSVKGTTDP) shows a compositional bias: polar residues. A helical membrane pass occupies residues 169-189 (WKFRFSIIRFAAVLTNFFYHY). Topologically, residues 190 to 216 (LTIQDYSFTSSPHFYVRALAPHPAVNS) are lumenal. The helical transmembrane segment at 217–236 (FITWFSTCEVAILASFYLIT) threads the bilayer. Residues 237 to 280 (SKNNIYANASDGNLLLKGISMGAMVLPQLRAYQPLVIRLAHYWE) are Cytoplasmic-facing. The chain crosses the membrane as a helical span at residues 281 to 301 (VFSMLLGDIFLVVVLFGLVSI). Residues 302–303 (YN) are Lumenal-facing.

This sequence belongs to the GET2 family. In terms of assembly, component of the Golgi to ER traffic (GET) complex, which is composed of GET1, GET2 and GET3. Within the complex, GET1 and GET2 form a heterotetramer which is stabilized by phosphatidylinositol binding and which binds to the GET3 homodimer.

The protein resides in the endoplasmic reticulum membrane. Its subcellular location is the golgi apparatus membrane. Functionally, required for the post-translational delivery of tail-anchored (TA) proteins to the endoplasmic reticulum. Together with GET1, acts as a membrane receptor for soluble GET3, which recognizes and selectively binds the transmembrane domain of TA proteins in the cytosol. The GET complex cooperates with the HDEL receptor ERD2 to mediate the ATP-dependent retrieval of resident ER proteins that contain a C-terminal H-D-E-L retention signal from the Golgi to the ER. The chain is Golgi to ER traffic protein 2 from Debaryomyces hansenii (strain ATCC 36239 / CBS 767 / BCRC 21394 / JCM 1990 / NBRC 0083 / IGC 2968) (Yeast).